The chain runs to 432 residues: Histidinol dehydrogenase (432 aa).

Residues Tyr-130, Gln-191, and Asn-214 each contribute to the NAD(+) site. Positions 237, 259, and 262 each coordinate substrate. Zn(2+) contacts are provided by Gln-259 and His-262. Active-site proton acceptor residues include Glu-327 and His-328. Residues His-328, Asp-361, Glu-415, and His-420 each coordinate substrate. Asp-361 lines the Zn(2+) pocket. Residue His-420 participates in Zn(2+) binding.

This sequence belongs to the histidinol dehydrogenase family. Requires Zn(2+) as cofactor.

The catalysed reaction is L-histidinol + 2 NAD(+) + H2O = L-histidine + 2 NADH + 3 H(+). It participates in amino-acid biosynthesis; L-histidine biosynthesis; L-histidine from 5-phospho-alpha-D-ribose 1-diphosphate: step 9/9. In terms of biological role, catalyzes the sequential NAD-dependent oxidations of L-histidinol to L-histidinaldehyde and then to L-histidine. This chain is Histidinol dehydrogenase, found in Agrobacterium fabrum (strain C58 / ATCC 33970) (Agrobacterium tumefaciens (strain C58)).